A 378-amino-acid chain; its full sequence is UPF0754 membrane protein BCG9842_B4423 (378 aa).

A helical membrane pass occupies residues 357–377 (YLGALLGGIIGLVQGLLLLFL).

Belongs to the UPF0754 family.

The protein resides in the cell membrane. This Bacillus cereus (strain G9842) protein is UPF0754 membrane protein BCG9842_B4423.